Consider the following 282-residue polypeptide: ATP phosphoribosyltransferase (282 aa).

The protein belongs to the ATP phosphoribosyltransferase family. Long subfamily. It depends on Mg(2+) as a cofactor.

It is found in the cytoplasm. The enzyme catalyses 1-(5-phospho-beta-D-ribosyl)-ATP + diphosphate = 5-phospho-alpha-D-ribose 1-diphosphate + ATP. Its pathway is amino-acid biosynthesis; L-histidine biosynthesis; L-histidine from 5-phospho-alpha-D-ribose 1-diphosphate: step 1/9. Its activity is regulated as follows. Feedback inhibited by histidine. In terms of biological role, catalyzes the condensation of ATP and 5-phosphoribose 1-diphosphate to form N'-(5'-phosphoribosyl)-ATP (PR-ATP). Has a crucial role in the pathway because the rate of histidine biosynthesis seems to be controlled primarily by regulation of HisG enzymatic activity. This Saccharopolyspora erythraea (strain ATCC 11635 / DSM 40517 / JCM 4748 / NBRC 13426 / NCIMB 8594 / NRRL 2338) protein is ATP phosphoribosyltransferase.